The primary structure comprises 623 residues: Glutathione import ATP-binding protein GsiA (623 aa).

ABC transporter domains follow at residues 15–269 (VSGL…QTLL) and 325–564 (LRSG…RKLM). ATP contacts are provided by residues 49-56 (GESGSGKS) and 357-364 (GESGSGKS).

This sequence belongs to the ABC transporter superfamily. Glutathione importer (TC 3.A.1.5.11) family. As to quaternary structure, the complex is composed of two ATP-binding proteins (GsiA), two transmembrane proteins (GsiC and GsiD) and a solute-binding protein (GsiB).

It localises to the cell inner membrane. The catalysed reaction is glutathione(out) + ATP + H2O = glutathione(in) + ADP + phosphate + H(+). Functionally, part of the ABC transporter complex GsiABCD involved in glutathione import. Responsible for energy coupling to the transport system. The protein is Glutathione import ATP-binding protein GsiA of Salmonella typhimurium (strain LT2 / SGSC1412 / ATCC 700720).